We begin with the raw amino-acid sequence, 636 residues long: Signal recognition particle receptor subunit alpha (636 aa).

3 disordered regions span residues 132 to 205 (APTT…ELSK), 217 to 246 (IQKHGKGLDKSSKSTKSDTPKEKGKKAPRV), and 280 to 314 (IRGTGPGGQLQDLDCSSSDDEGATQNTKPSATKGT). 2 stretches are compositionally biased toward basic and acidic residues: residues 137–146 (KKFEDSEKAK) and 153–165 (IETRGEKTKEKAK). S177 bears the Phosphoserine mark. Residues 217–238 (IQKHGKGLDKSSKSTKSDTPKE) show a composition bias toward basic and acidic residues. T283 bears the Phosphothreonine mark. Residues S295, S296, and S297 each carry the phosphoserine modification. The segment covering 302–312 (ATQNTKPSATK) has biased composition (polar residues). The residue at position 303 (T303) is a Phosphothreonine. Positions 417–634 (YVVTFCGVNG…NAKAVVAALM (218 aa)) are NG domain. Residues 423–430 (GVNGVGKS) and 518–522 (DTAGR) each bind GTP. Position 576 is a phosphothreonine (T576). 586–589 (TKFD) contributes to the GTP binding site.

It belongs to the GTP-binding SRP family. Heterodimer with SRPRB. Interacts with the signal recognition particle (SRP) complex subunit SRP54.

It is found in the endoplasmic reticulum membrane. Its function is as follows. Component of the SRP (signal recognition particle) receptor. Ensures, in conjunction with the signal recognition particle, the correct targeting of the nascent secretory proteins to the endoplasmic reticulum membrane system. Forms a guanosine 5'-triphosphate (GTP)-dependent complex with the SRP subunit SRP54. SRP receptor compaction and GTPase rearrangement drive SRP-mediated cotranslational protein translocation into the ER. The polypeptide is Signal recognition particle receptor subunit alpha (Mus musculus (Mouse)).